Consider the following 185-residue polypeptide: Ribosome-recycling factor (185 aa).

Belongs to the RRF family.

It is found in the cytoplasm. Its function is as follows. Responsible for the release of ribosomes from messenger RNA at the termination of protein biosynthesis. May increase the efficiency of translation by recycling ribosomes from one round of translation to another. The chain is Ribosome-recycling factor from Neorickettsia sennetsu (strain ATCC VR-367 / Miyayama) (Ehrlichia sennetsu).